Consider the following 348-residue polypeptide: Fructose-1,6-bisphosphatase (348 aa).

The short motif at P2–V5 is the Pro/N-degron element. At S12 the chain carries Phosphoserine. AMP is bound by residues I27–Q31 and T38–T42. Mg(2+)-binding residues include D79 and E108. S122–Y123 provides a ligand contact to AMP. Mg(2+)-binding residues include D128, I130, and D131. D131–S134 serves as a coordination point for substrate. R150 is a binding site for AMP. Substrate is bound by residues N222–N225, R255–M260, Y276, and K286–R288. E292 provides a ligand contact to Mg(2+).

This sequence belongs to the FBPase class 1 family. Homotetramer. The cofactor is Mg(2+). Ubiquitinated. Targeted for proteasomal degradation when cells are shifted to glucose-containing growth medium.

It carries out the reaction beta-D-fructose 1,6-bisphosphate + H2O = beta-D-fructose 6-phosphate + phosphate. Its pathway is carbohydrate biosynthesis; gluconeogenesis. With respect to regulation, subject to complex allosteric regulation. The enzyme can assume an active R-state, or an inactive T-state. Intermediate conformations may exist. AMP acts as allosteric inhibitor. AMP binding affects the turnover of bound substrate and not the affinity for substrate. The protein is Fructose-1,6-bisphosphatase (FBP1) of Saccharomyces cerevisiae (strain ATCC 204508 / S288c) (Baker's yeast).